The sequence spans 166 residues: MIQSCRKLFRSDRCPNLHRKKPAYLEAGQRGFPEKSTRQKINYHELKHLSKVPQRPHKPTIDGQSTPTRIPVDAQTVRLSLVDLDSAEAHRTLEDAIEFASQILSVDTDGVEPLYTVLERDRLTLREDRVSDGNIQQDVLRNARVTEEEYFVAPPGNIPLEQEPKK.

It belongs to the GatC family. In terms of assembly, subunit of the heterotrimeric GatCAB amidotransferase (AdT) complex, composed of A, B and C subunits.

The protein localises to the mitochondrion. The catalysed reaction is L-glutamyl-tRNA(Gln) + L-glutamine + ATP + H2O = L-glutaminyl-tRNA(Gln) + L-glutamate + ADP + phosphate + H(+). Allows the formation of correctly charged Gln-tRNA(Gln) through the transamidation of misacylated Glu-tRNA(Gln) in the mitochondria. The reaction takes place in the presence of glutamine and ATP through an activated gamma-phospho-Glu-tRNA(Gln). The protein is Glutamyl-tRNA(Gln) amidotransferase subunit C-2, mitochondrial of Culex quinquefasciatus (Southern house mosquito).